Consider the following 2285-residue polypeptide: AT-rich interactive domain-containing protein 1A (2285 aa).

Low complexity predominate over residues 1 to 14; the sequence is MAAQVAPAAASSLG. 2 disordered regions span residues 1-820 and 978-1005; these read MAAQ…ALPN and ATKMNNKADGTPKTESKSKKSSSSTTTN. Position 2 is an N-acetylalanine (A2). Over residues 23-35 the composition is skewed to basic and acidic residues; sequence ELKKAEQQQREEA. A phosphoserine mark is found at S58 and S79. Gly residues-rich tracts occupy residues 79 to 95 and 121 to 130; these read SNGGGGGGGAGSGGGPG and PGGGGGGSSD. Composition is skewed to low complexity over residues 131-142, 212-221, and 228-265; these read GVGAPPHSAAAA, YNSYYPNRSA, and AYALSSPRGGTPGSGAAAAAGSKPPPSSSASASSSSSS. At S233 the chain carries Phosphoserine. Gly residues predominate over residues 273 to 286; sequence AMGGGGPSAAGGGT. T286 carries the post-translational modification Phosphothreonine. The LXXLL signature appears at 295 to 299; it reads LNQLL. A compositionally biased stretch (polar residues) spans 295–306; sequence LNQLLTSPSSAR. S301 is subject to Phosphoserine. A compositionally biased stretch (gly residues) spans 310-327; the sequence is GYPGGDYSGGPQDGGAGK. Positions 338–353 are enriched in low complexity; sequence GAAAAAAAAAAASGGA. Phosphoserine occurs at positions 363 and 382. The span at 400–425 shows a compositional bias: low complexity; the sequence is PYSQQQGPPSGPQQGHGYPGQPYGSQ. Position 429 is an asymmetric dimethylarginine (R429). Composition is skewed to low complexity over residues 447-457, 465-546, and 553-595; these read YTQQIPPYGQQ, QGQT…QHPQ, and QPQA…YSQQ. Residue S604 is modified to Phosphoserine. Positions 610–621 are enriched in low complexity; that stretch reads SQASSAPSMTSS. Over residues 628-637 the composition is skewed to polar residues; that stretch reads MNLSLQSRPS. The segment covering 658 to 674 has biased composition (low complexity); the sequence is SPGVSTSGISSSQGEQS. Residues 675–685 show a composition bias toward polar residues; the sequence is NPAQSPFSPHT. Phosphoserine is present on residues S696, S698, S702, S730, S764, and S772. 2 stretches are compositionally biased toward polar residues: residues 730–747 and 755–793; these read SGQSDSIMHPSMNQSSIA and RNPQMPQYSSPQPGSALSPRQPSGGQIHTGMGSYQQNSM. The segment covering 797-807 has biased composition (gly residues); sequence GPQGGQYGPQG. Residues 808–820 are compositionally biased toward low complexity; that stretch reads GYPRQPNYNALPN. The region spanning 1017–1108 is the ARID domain; it reads EPERKMWVDR…CLYAFECKIE (92 aa). 2 disordered regions span residues 1113–1483 and 1539–1603; these read PPPD…MMGG and ANHE…SPSK. Residues 1141-1154 show a composition bias toward low complexity; the sequence is MQGPQTPQSTSSSM. Positions 1162–1177 are enriched in pro residues; it reads PPTPASTPHSQIPPLP. S1184 is subject to Phosphoserine. The span at 1194–1219 shows a compositional bias: polar residues; the sequence is GSDSTFQKRNSMTPNPGYQPSMNTSD. The residue at position 1235 (S1235) is a Phosphoserine. Omega-N-methylarginine is present on R1276. 2 stretches are compositionally biased toward polar residues: residues 1299 to 1315 and 1339 to 1356; these read NMSTGAPQPNLMPSNPD and YGNQFSTQGTPSGSPFPS. Residues 1357–1367 are compositionally biased toward low complexity; sequence QQTTMYQQQQQ. Positions 1368–1387 match the Nuclear localization signal motif; sequence NYKRPMDGTYGPPAKRHEGE. Positions 1396–1425 are enriched in low complexity; the sequence is GQGQPQQQQLPPAQPQPASQQQAAQPSPQQ. The span at 1468–1477 shows a compositional bias: polar residues; the sequence is PGTNAQQNMP. Pro residues predominate over residues 1554–1577; that stretch reads PYGPSAPVPPMTRPPPSNYQPPPS. A Phosphoserine modification is found at S1604. K1612 is modified (N6-acetyllysine). The LXXLL motif lies at 1709-1713; it reads LPGLL. Disordered regions lie at residues 1747–1774 and 1859–1907; these read PGRFSKVSSPAPMEGGEEEEELLGPKLE and FESK…EKRI. Phosphoserine occurs at positions 1751 and 1754. Over residues 1761 to 1774 the composition is skewed to acidic residues; sequence GGEEEEELLGPKLE. A compositionally biased stretch (low complexity) spans 1886–1895; it reads EGTPGTTDQE. At T1888 the chain carries Phosphothreonine. N6-acetyllysine is present on K1905. 2 positions are modified to phosphoserine: S1929 and S1944. 2 consecutive short sequence motifs (LXXLL) follow at residues 1967 to 1971 and 2085 to 2089; these read LCTLL and LDGLL.

As to quaternary structure, component of SWI/SNF chromatin remodeling complexes, in some of which it can be mutually exclusive with ARID1B/BAF250B. The canonical complex contains a catalytic subunit (either SMARCA4/BRG1/BAF190A or SMARCA2/BRM/BAF190B) and at least SMARCE1, ACTL6A/BAF53, SMARCC1/BAF155, SMARCC2/BAF170, and SMARCB1/SNF5/BAF47. Other subunits specific to each of the complexes may also be present permitting several possible combinations developmentally and tissue specific. Component of the BAF (SWI/SNF-A) complex, which includes at least actin (ACTB), ARID1A/BAF250A, ARID1B/BAF250B, SMARCA2/BRM, SMARCA4/BRG1/BAF190A, ACTL6A/BAF53, ACTL6B/BAF53B, SMARCE1/BAF57, SMARCC1/BAF155, SMARCC2/BAF170, SMARCB1/SNF5/INI1, and one or more SMARCD1/BAF60A, SMARCD2/BAF60B, or SMARCD3/BAF60C. In muscle cells, the BAF complex also contains DPF3. Component of neural progenitors-specific chromatin remodeling complex (npBAF complex) composed of at least, ARID1A/BAF250A or ARID1B/BAF250B, SMARCD1/BAF60A, SMARCD3/BAF60C, SMARCA2/BRM/BAF190B, SMARCA4/BRG1/BAF190A, SMARCB1/BAF47, SMARCC1/BAF155, SMARCE1/BAF57, SMARCC2/BAF170, PHF10/BAF45A, ACTL6A/BAF53A and actin. Component of neuron-specific chromatin remodeling complex (nBAF complex) composed of at least, ARID1A/BAF250A or ARID1B/BAF250B, SMARCD1/BAF60A, SMARCD3/BAF60C, SMARCA2/BRM/BAF190B, SMARCA4/BRG1/BAF190A, SMARCB1/BAF47, SMARCC1/BAF155, SMARCE1/BAF57, SMARCC2/BAF170, DPF1/BAF45B, DPF3/BAF45C, ACTL6B/BAF53B and actin. Component of a SWI/SNF-like EBAFa complex, at least composed of SMARCA4/BRG1/BAF190A, SMARCB1/BAF47/SNF5, ACTL6A/BAF53A, SMARCE1/BAF57, SMARCD1/BAF60A, SMARCC1/BAF155, SMARCC2/BAF170, BAF250A and MLLT1/ENL. Interacts through its C-terminus with SMARCA2/BRM/BAF190B and SMARCA4/BRG1/BAF190A. Interacts with SMARCC1/BAF155. Interacts with FOS, FOSB isoform 1 and 2, FOSL1 and FOSL2. As to expression, highly expressed in spleen, thymus, prostate, testis, ovary, small intestine, colon, and PBL, and at a much lower level in heart, brain, placenta, lung, liver, skeletal muscle, kidney, and pancreas.

It is found in the nucleus. Involved in transcriptional activation and repression of select genes by chromatin remodeling (alteration of DNA-nucleosome topology). Component of SWI/SNF chromatin remodeling complexes that carry out key enzymatic activities, changing chromatin structure by altering DNA-histone contacts within a nucleosome in an ATP-dependent manner. Binds DNA non-specifically. Belongs to the neural progenitors-specific chromatin remodeling complex (npBAF complex) and the neuron-specific chromatin remodeling complex (nBAF complex). During neural development a switch from a stem/progenitor to a postmitotic chromatin remodeling mechanism occurs as neurons exit the cell cycle and become committed to their adult state. The transition from proliferating neural stem/progenitor cells to postmitotic neurons requires a switch in subunit composition of the npBAF and nBAF complexes. As neural progenitors exit mitosis and differentiate into neurons, npBAF complexes which contain ACTL6A/BAF53A and PHF10/BAF45A, are exchanged for homologous alternative ACTL6B/BAF53B and DPF1/BAF45B or DPF3/BAF45C subunits in neuron-specific complexes (nBAF). The npBAF complex is essential for the self-renewal/proliferative capacity of the multipotent neural stem cells. The nBAF complex along with CREST plays a role regulating the activity of genes essential for dendrite growth. This Homo sapiens (Human) protein is AT-rich interactive domain-containing protein 1A (ARID1A).